The chain runs to 343 residues: Aspartate-semialdehyde dehydrogenase (343 aa).

Residues Ser-20–Val-23 and Arg-48–Ser-49 contribute to the NADP(+) site. Arg-108 lines the phosphate pocket. The Acyl-thioester intermediate role is filled by Cys-137. Gln-164 serves as a coordination point for substrate. Position 167-168 (Ser-167–Gly-168) interacts with NADP(+). Lys-221 contributes to the phosphate binding site. Arg-243 contacts substrate. The active-site Proton acceptor is His-250. Gln-323 is a binding site for NADP(+).

Belongs to the aspartate-semialdehyde dehydrogenase family. As to quaternary structure, homodimer.

It carries out the reaction L-aspartate 4-semialdehyde + phosphate + NADP(+) = 4-phospho-L-aspartate + NADPH + H(+). Its pathway is amino-acid biosynthesis; L-lysine biosynthesis via DAP pathway; (S)-tetrahydrodipicolinate from L-aspartate: step 2/4. It functions in the pathway amino-acid biosynthesis; L-methionine biosynthesis via de novo pathway; L-homoserine from L-aspartate: step 2/3. The protein operates within amino-acid biosynthesis; L-threonine biosynthesis; L-threonine from L-aspartate: step 2/5. Functionally, catalyzes the NADPH-dependent formation of L-aspartate-semialdehyde (L-ASA) by the reductive dephosphorylation of L-aspartyl-4-phosphate. This chain is Aspartate-semialdehyde dehydrogenase, found in Prochlorococcus marinus (strain SARG / CCMP1375 / SS120).